Consider the following 300-residue polypeptide: 4-hydroxy-tetrahydrodipicolinate synthase (300 aa).

Thr56 serves as a coordination point for pyruvate. Tyr145 acts as the Proton donor/acceptor in catalysis. The active-site Schiff-base intermediate with substrate is the Lys173. Val215 lines the pyruvate pocket.

The protein belongs to the DapA family. As to quaternary structure, homotetramer; dimer of dimers.

Its subcellular location is the cytoplasm. It carries out the reaction L-aspartate 4-semialdehyde + pyruvate = (2S,4S)-4-hydroxy-2,3,4,5-tetrahydrodipicolinate + H2O + H(+). Its pathway is amino-acid biosynthesis; L-lysine biosynthesis via DAP pathway; (S)-tetrahydrodipicolinate from L-aspartate: step 3/4. Its function is as follows. Catalyzes the condensation of (S)-aspartate-beta-semialdehyde [(S)-ASA] and pyruvate to 4-hydroxy-tetrahydrodipicolinate (HTPA). The chain is 4-hydroxy-tetrahydrodipicolinate synthase from Prochlorococcus marinus (strain MIT 9301).